The chain runs to 179 residues: Laminin-binding fimbrial subunit ElfA (179 aa).

A signal peptide spans 1–21 (MKKSVLTAFITVVCATSSVMA).

This sequence belongs to the fimbrial protein family.

It is found in the fimbrium. In terms of biological role, part of the elfADCG fimbrial operon, which could be required for adherence to host epithelial cells. ElfA is an accessory colonization factor that contributes to adherence of bacteria to human intestinal epithelial cells and to animal intestinal tissue in vitro. Binds specifically to laminin, but not to fibronectin or collagen type IV. The sequence is that of Laminin-binding fimbrial subunit ElfA (elfA) from Escherichia coli O157:H7.